The primary structure comprises 134 residues: Profilin-1 (134 aa).

A disulfide bond links C13 and C118. Residues 84 to 100 carry the Involved in PIP2 interaction motif; it reads AVIRGKKGSGGITIKKT. T114 carries the post-translational modification Phosphothreonine.

The protein belongs to the profilin family. In terms of assembly, occurs in many kinds of cells as a complex with monomeric actin in a 1:1 ratio. Post-translationally, phosphorylated by MAP kinases.

It is found in the cytoplasm. Its subcellular location is the cytoskeleton. Binds to actin and affects the structure of the cytoskeleton. At high concentrations, profilin prevents the polymerization of actin, whereas it enhances it at low concentrations. By binding to PIP2, it inhibits the formation of IP3 and DG. This Olea europaea (Common olive) protein is Profilin-1 (PRO1).